A 271-amino-acid chain; its full sequence is Troponin T, fast skeletal muscle (271 aa).

The segment covering 1 to 21 (MSDEEVEHVEEEYEEEEEAQE) has biased composition (acidic residues). The segment at 1-74 (MSDEEVEHVE…EKVDFDDIQK (74 aa)) is disordered. Residue Ser-2 is modified to N-acetylserine. Residue Ser-2 is modified to Phosphoserine. Basic and acidic residues-rich tracts occupy residues 29–53 (EVHE…EKPR) and 62–74 (PEGE…DIQK). Ser-90 bears the Phosphoserine mark. Residues 113 to 155 (RAERAEQQRIRAEKERERQNRLAEEKARREEEEAKRRAEDDLK) show a composition bias toward basic and acidic residues. A disordered region spans residues 113 to 192 (RAERAEQQRI…TAREMKKKVL (80 aa)). 3 positions are modified to phosphoserine: Ser-161, Ser-168, and Ser-169. The span at 183–192 (TAREMKKKVL) shows a compositional bias: basic and acidic residues. Phosphoserine is present on Ser-205. Tyr-221 bears the Phosphotyrosine mark. Residues 249–271 (DQAQKHSKKAGTTPKGKVGGRWK) are disordered.

This sequence belongs to the troponin T family.

Functionally, troponin T is the tropomyosin-binding subunit of troponin, the thin filament regulatory complex which confers calcium-sensitivity to striated muscle actomyosin ATPase activity. This Sus scrofa (Pig) protein is Troponin T, fast skeletal muscle (TNNT3).